Consider the following 377-residue polypeptide: Membrane progestin receptor epsilon (377 aa).

The tract at residues 1–40 is disordered; it reads MPRRLQPRGAGTKGPPAPAPAASGAARNSHSAASRDPPAS. Topologically, residues 1-86 are cytoplasmic; sequence MPRRLQPRGA…VLKPTNETLN (86 aa). Low complexity predominate over residues 9-26; the sequence is GAGTKGPPAPAPAASGAA. A helical transmembrane segment spans residues 87 to 107; sequence FWTHFIPLLLFLSKFCRLFFL. Topologically, residues 108-116 are extracellular; it reads SGGDVPFHH. The chain crosses the membrane as a helical span at residues 117-137; sequence PWLLPLWCYASGVLLTFAMSC. At 138–162 the chain is on the cytoplasmic side; that stretch reads TAHVFSCLSLRLRAAFFYLDYASIS. The chain crosses the membrane as a helical span at residues 163-183; that stretch reads YYGFGSTVAYYYYLLPGLSLL. At 184-205 the chain is on the extracellular side; the sequence is DARVMTPYLQQRLGWHVDCTRL. The helical transmembrane segment at 206 to 226 threads the bilayer; the sequence is IAAYRALVLPVAFVLAVACTV. At 227–243 the chain is on the cytoplasmic side; that stretch reads ACCKSRTDWCTYPFALR. The helical transmembrane segment at 244 to 264 threads the bilayer; that stretch reads TFVFVMPLSMACPIMLESWLF. Over 265 to 301 the chain is Extracellular; it reads DLRGENPTLFVHFYRRYFWLVVAAFFNVSKIPERIQP. A helical membrane pass occupies residues 302–322; that stretch reads GLFDIIGHSHQLFHIFTFLSI. The Cytoplasmic portion of the chain corresponds to 323–343; that stretch reads YDQVYYVEEGLRQFLQAPPAA. The chain crosses the membrane as a helical span at residues 344 to 364; sequence PTFSGTVGYMLLLVVCLGLVI. The Extracellular portion of the chain corresponds to 365–377; the sequence is RKFLNSSEFCSKK.

The protein belongs to the ADIPOR family. Homodimer. Expression levels vary widely in a range of tissues. Expressed in the brain, at high level in the pituitary gland and also in hypothalamus, limbic system, caudate nucleus accumens, pons and olfactory bulb.

Its subcellular location is the cell membrane. Plasma membrane progesterone (P4) receptor coupled to G proteins. Seems to act through a G(s) mediated pathway. May be involved in regulating rapid P4 signaling in the nervous system. Also binds dehydroepiandrosterone (DHEA), pregnanolone, pregnenolone and allopregnanolone. In Homo sapiens (Human), this protein is Membrane progestin receptor epsilon.